The following is a 209-amino-acid chain: Uracil phosphoribosyltransferase (209 aa).

Residues Arg-79, Arg-104, and 131–139 each bind 5-phospho-alpha-D-ribose 1-diphosphate; that span reads DPMLATGGS. Residues Ile-194 and 199–201 contribute to the uracil site; that span reads GDA. Asp-200 contributes to the 5-phospho-alpha-D-ribose 1-diphosphate binding site.

It belongs to the UPRTase family. Requires Mg(2+) as cofactor.

The enzyme catalyses UMP + diphosphate = 5-phospho-alpha-D-ribose 1-diphosphate + uracil. It functions in the pathway pyrimidine metabolism; UMP biosynthesis via salvage pathway; UMP from uracil: step 1/1. With respect to regulation, allosterically activated by GTP. Functionally, catalyzes the conversion of uracil and 5-phospho-alpha-D-ribose 1-diphosphate (PRPP) to UMP and diphosphate. In Citrifermentans bemidjiense (strain ATCC BAA-1014 / DSM 16622 / JCM 12645 / Bem) (Geobacter bemidjiensis), this protein is Uracil phosphoribosyltransferase.